Here is a 689-residue protein sequence, read N- to C-terminus: Glycine--tRNA ligase beta subunit (689 aa).

Belongs to the class-II aminoacyl-tRNA synthetase family. As to quaternary structure, tetramer of two alpha and two beta subunits.

It is found in the cytoplasm. The enzyme catalyses tRNA(Gly) + glycine + ATP = glycyl-tRNA(Gly) + AMP + diphosphate. The sequence is that of Glycine--tRNA ligase beta subunit from Erwinia tasmaniensis (strain DSM 17950 / CFBP 7177 / CIP 109463 / NCPPB 4357 / Et1/99).